The primary structure comprises 473 residues: MRIYNTATRQVEEFTTYVPRLARGYVCGITPYDHMHVGHGRVYVFFDIFRRYLERLGYEVRLVINFTDIDDKIINRAKEEFGHEAYKRWREIPERYIAEYFEMTKKLYIKPAYAYPRVTENVEDMVKWISTLVEKGYAYVAPDGSVYFEVAKVPNYGVLSRQKIEELVAGARVEPEPGKRNPLDFALWKSWTPGEPWWDSPWCPGRPGWHLECVVMSTKHLGAPFDFHGGGADLIFPHHENEIAIARAYFGVDNFARYWIHVGYLTVRGEKMSKSLGNIITLREVLSKHSGEALRLAYAMSHYRKPMEFTYELLQQAEDMAKTLYTAYDELSQALRDAGEKDQEPLAQEALKYAEAFYGALDDDMSTPEAVQQLYGMARYIISTVLHKIEKISRETALTILNKYVEMADVLGVLERRQIPKELEEVVKTLVEVRAKLRQERQYQLADYIRQRLAELGVELHDFGPRTYYTYRR.

Residue Cys-27 coordinates Zn(2+). The 'HIGH' region motif lies at 29–39 (ITPYDHMHVGH). Cys-213, His-238, and Glu-242 together coordinate Zn(2+). The 'KMSKS' region signature appears at 271–275 (KMSKS). Lys-274 contributes to the ATP binding site.

It belongs to the class-I aminoacyl-tRNA synthetase family. Zn(2+) serves as cofactor.

It is found in the cytoplasm. The catalysed reaction is tRNA(Cys) + L-cysteine + ATP = L-cysteinyl-tRNA(Cys) + AMP + diphosphate. The sequence is that of Cysteine--tRNA ligase from Pyrobaculum islandicum (strain DSM 4184 / JCM 9189 / GEO3).